Here is a 239-residue protein sequence, read N- to C-terminus: Probable transcriptional regulatory protein BAA_0622 (239 aa).

It belongs to the TACO1 family. YeeN subfamily.

It is found in the cytoplasm. This Bacillus anthracis (strain A0248) protein is Probable transcriptional regulatory protein BAA_0622.